A 266-amino-acid chain; its full sequence is UPF0294 protein YafD (266 aa).

This sequence belongs to the UPF0294 family.

The protein resides in the cytoplasm. The chain is UPF0294 protein YafD from Shigella dysenteriae serotype 1 (strain Sd197).